A 200-amino-acid chain; its full sequence is Probable GTP-binding protein EngB (200 aa).

One can recognise an EngB-type G domain in the interval 22-195 (GKDEIAFVGR…INNICSGINY (174 aa)). GTP-binding positions include 30-37 (GRSNVGKS), 57-61 (GKTRL), 75-78 (DLPG), 142-145 (TKSD), and 174-176 (FSS). Residues serine 37 and threonine 59 each coordinate Mg(2+).

This sequence belongs to the TRAFAC class TrmE-Era-EngA-EngB-Septin-like GTPase superfamily. EngB GTPase family. Requires Mg(2+) as cofactor.

In terms of biological role, necessary for normal cell division and for the maintenance of normal septation. This chain is Probable GTP-binding protein EngB, found in Clostridium acetobutylicum (strain ATCC 824 / DSM 792 / JCM 1419 / IAM 19013 / LMG 5710 / NBRC 13948 / NRRL B-527 / VKM B-1787 / 2291 / W).